Here is a 66-residue protein sequence, read N- to C-terminus: Phylloseptin-Az2 (66 aa).

The N-terminal stretch at 1 to 22 (MAFLKKSLFLVLFLGLVSLSIC) is a signal peptide. The propeptide occupies 23 to 44 (EEEKRETEEKENEQEDDDKSEE). Residues 24–45 (EEKRETEEKENEQEDDDKSEEK) form a disordered region. Residues 31-41 (EKENEQEDDDK) are compositionally biased toward acidic residues. Phe65 carries the post-translational modification Phenylalanine amide.

As to expression, expressed by the skin glands.

It localises to the secreted. Its function is as follows. Has antibacterial activity against the Gram-negative bacteria E.coli ATCC 11775 (MIC=7.2 uM), and the Gram-positive bacteria S.aureus ATCC 12600 (MIC=3.6 uM) and M.luteus ATCC 49732 (MIC=1.8 uM). Does not inhibit the growth of the fungus C.albicans. The chain is Phylloseptin-Az2 from Pithecopus azureus (Orange-legged monkey tree frog).